The following is a 212-amino-acid chain: CRIB domain-containing protein RIC6 (212 aa).

Positions 34–47 (IGNPTDVKHVAHIG) constitute a CRIB domain. The segment at 51 to 212 (PSANATAPSW…MPQFDNRDDF (162 aa)) is disordered. Positions 53-65 (ANATAPSWMTEFN) are enriched in polar residues. Positions 106 to 121 (AASEKGSPTKDKSSDK) are enriched in basic and acidic residues. Residues 192-202 (EYMSETGSVRS) are compositionally biased toward polar residues.

As to quaternary structure, interacts with ARAC11/ROP1. As to expression, expressed in flowers and pollen.

It localises to the cell membrane. Functionally, functions as a downstream effector of Rho-related GTP binding proteins of the 'Rho of Plants' (ROPs) family. Participates in the propagation of ROP GTPase signals in specific cellular responses. Is involved in pollen tube growth regulation through its interaction with ARAC11/ROP1. This is CRIB domain-containing protein RIC6 (RIC6) from Arabidopsis thaliana (Mouse-ear cress).